The following is a 208-amino-acid chain: Uracil phosphoribosyltransferase (208 aa).

Residues Arg-78, Arg-103, and 130-138 (DPMLATGGS) each bind 5-phospho-alpha-D-ribose 1-diphosphate. Residues Ile-193 and 198–200 (GDA) each bind uracil. Asp-199 contacts 5-phospho-alpha-D-ribose 1-diphosphate.

This sequence belongs to the UPRTase family. The cofactor is Mg(2+).

The enzyme catalyses UMP + diphosphate = 5-phospho-alpha-D-ribose 1-diphosphate + uracil. The protein operates within pyrimidine metabolism; UMP biosynthesis via salvage pathway; UMP from uracil: step 1/1. Its activity is regulated as follows. Allosterically activated by GTP. Functionally, catalyzes the conversion of uracil and 5-phospho-alpha-D-ribose 1-diphosphate (PRPP) to UMP and diphosphate. In Shewanella frigidimarina (strain NCIMB 400), this protein is Uracil phosphoribosyltransferase.